The chain runs to 526 residues: Delayed-rectifier potassium channel regulatory subunit KCNS1 (526 aa).

At 1–217 the chain is on the cytoplasmic side; it reads MLMLLVRGTH…LTMENPGYSL (217 aa). A helical transmembrane segment spans residues 218–239; that stretch reads PSKLFSCVSISVVLASIAAMCI. Residues 240–270 lie on the Extracellular side of the membrane; that stretch reads HSLPEYQAREAAAAVAAVAAGRSPEGVRDDP. Residues 271 to 293 traverse the membrane as a helical segment; it reads VLRRLEYFCIAWFSFEVSSRLLL. Residues 294–304 lie on the Cytoplasmic side of the membrane; it reads APSTRNFFCHP. The chain crosses the membrane as a helical span at residues 305 to 322; sequence LNLIDIVSVLPFYLTLLA. Residues 323–337 are Extracellular-facing; it reads GVALGDQGGKEFGHL. A helical; Voltage-sensor transmembrane segment spans residues 338–358; it reads GKVVQVFRLMRIFRVLKLARH. Over 359-373 the chain is Cytoplasmic; that stretch reads STGLRSLGATLKHSY. A helical membrane pass occupies residues 374 to 395; the sequence is REVGILLLYLAVGVSVFSGVAY. Residues 396–408 are Extracellular-facing; it reads TAEKEEDVGFNTI. Residues 409–420 constitute an intramembrane region (helical); that stretch reads PACWWWGTVSMT. Positions 421 to 426 match the Selectivity filter motif; it reads TVGYGD. The stretch at 421 to 428 is an intramembrane region; the sequence is TVGYGDVV. The Extracellular portion of the chain corresponds to 429–435; that stretch reads PVTVAGK. Residues 436–464 traverse the membrane as a helical segment; the sequence is LAASGCILGGILVVALPITIIFNKFSHFY. Over 465–526 the chain is Cytoplasmic; sequence RRQKALEAAV…PSEPPHPQRY (62 aa). Residues 492–526 are disordered; sequence VSEASLETSGETSQEGRSADLESQAPSEPPHPQRY. Positions 496–507 are enriched in polar residues; sequence SLETSGETSQEG.

Belongs to the potassium channel family. S (TC 1.A.1.2) subfamily. Kv9.1/KCNS1 sub-subfamily. In terms of assembly, heterotetramer with KCNB1. Heterotetramer with KCNB2. Does not form homomultimers.

The protein resides in the cell membrane. Functionally, potassium channel regulatory subunit that modulate the delayed rectifier voltage-gated potassium channel activity of KCNB1 and KCNB2 by altering their kinetics, expression levels, and shifting the half-inactivation potential to more polarized values. While it does not form functional channels on its own, it can form functional heterotetrameric channels with KCNB1 and KCNB2. Each regulatory subunit has unique regulatory properties that can lead to extensive inhibition, significant changes in kinetics, and/or substantial shifts in the voltage dependencies of the inactivation process. This is Delayed-rectifier potassium channel regulatory subunit KCNS1 from Gorilla gorilla gorilla (Western lowland gorilla).